A 412-amino-acid polypeptide reads, in one-letter code: Peptidase T (412 aa).

A Zn(2+)-binding site is contributed by His-83. Asp-85 is a catalytic residue. Position 145 (Asp-145) interacts with Zn(2+). Glu-179 acts as the Proton acceptor in catalysis. 3 residues coordinate Zn(2+): Glu-180, Asp-202, and His-384.

It belongs to the peptidase M20B family. Zn(2+) serves as cofactor.

It is found in the cytoplasm. It catalyses the reaction Release of the N-terminal residue from a tripeptide.. Cleaves the N-terminal amino acid of tripeptides. The protein is Peptidase T of Fusobacterium nucleatum subsp. nucleatum (strain ATCC 25586 / DSM 15643 / BCRC 10681 / CIP 101130 / JCM 8532 / KCTC 2640 / LMG 13131 / VPI 4355).